The chain runs to 233 residues: Aspartate/glutamate leucyltransferase (233 aa).

The protein belongs to the R-transferase family. Bpt subfamily.

It is found in the cytoplasm. The enzyme catalyses N-terminal L-glutamyl-[protein] + L-leucyl-tRNA(Leu) = N-terminal L-leucyl-L-glutamyl-[protein] + tRNA(Leu) + H(+). The catalysed reaction is N-terminal L-aspartyl-[protein] + L-leucyl-tRNA(Leu) = N-terminal L-leucyl-L-aspartyl-[protein] + tRNA(Leu) + H(+). Its function is as follows. Functions in the N-end rule pathway of protein degradation where it conjugates Leu from its aminoacyl-tRNA to the N-termini of proteins containing an N-terminal aspartate or glutamate. In Vibrio parahaemolyticus serotype O3:K6 (strain RIMD 2210633), this protein is Aspartate/glutamate leucyltransferase.